The chain runs to 172 residues: Epididymal secretory protein 4 (172 aa).

The N-terminal stretch at 1–21 is a signal peptide; that stretch reads MIAVLLLVFGMTPDYIFPVSA. Cys-82 and Cys-167 are oxidised to a cystine.

Belongs to the calycin superfamily. Lipocalin family. Secreted by the epididymal epithelial cells.

The protein localises to the secreted. It is found in the extracellular space. Functionally, could transport small hydrophobic molecules into the epididymal fluid during the sperm maturation. Binds to the head region of spermatozoa and plays a key role in sperm maturation. The sequence is that of Epididymal secretory protein 4 from Zootoca vivipara (Common lizard).